The following is a 570-amino-acid chain: 5-aminolevulinate synthase, mitochondrial (570 aa).

The transit peptide at 1–53 (MESVIRSSAKICPFMHSATGSMQSVKALKNANLPAIAQQCPFMGKAMEQRRGY) directs the protein to the mitochondrion. The substrate site is built by R119, S232, and K251. Residues S284, H312, and T356 each contribute to the pyridoxal 5'-phosphate site. K359 is an active-site residue. K359 carries the post-translational modification N6-(pyridoxal phosphate)lysine. Residues T388 and T389 each coordinate pyridoxal 5'-phosphate. Substrate is bound at residue T474.

This sequence belongs to the class-II pyridoxal-phosphate-dependent aminotransferase family. Homodimer. Pyridoxal 5'-phosphate is required as a cofactor.

The protein resides in the mitochondrion matrix. It catalyses the reaction succinyl-CoA + glycine + H(+) = 5-aminolevulinate + CO2 + CoA. Its pathway is porphyrin-containing compound metabolism; protoporphyrin-IX biosynthesis; 5-aminolevulinate from glycine: step 1/1. Catalyzes the synthesis of 5-aminolevulinate (ALA) from succinyl-CoA and glycine, the first and rate-limiting step in heme biosynthesis. This is 5-aminolevulinate synthase, mitochondrial (HEM1) from Kluyveromyces lactis (strain ATCC 8585 / CBS 2359 / DSM 70799 / NBRC 1267 / NRRL Y-1140 / WM37) (Yeast).